Consider the following 199-residue polypeptide: Imidazole glycerol phosphate synthase subunit HisH 2 (199 aa).

One can recognise a Glutamine amidotransferase type-1 domain in the interval 1–199; it reads MIAVIDVSGN…NNFLSLESTC (199 aa). The active-site Nucleophile is the cysteine 76. Active-site residues include histidine 177 and glutamate 179.

As to quaternary structure, heterodimer of HisH and HisF.

It localises to the cytoplasm. The enzyme catalyses 5-[(5-phospho-1-deoxy-D-ribulos-1-ylimino)methylamino]-1-(5-phospho-beta-D-ribosyl)imidazole-4-carboxamide + L-glutamine = D-erythro-1-(imidazol-4-yl)glycerol 3-phosphate + 5-amino-1-(5-phospho-beta-D-ribosyl)imidazole-4-carboxamide + L-glutamate + H(+). The catalysed reaction is L-glutamine + H2O = L-glutamate + NH4(+). It functions in the pathway amino-acid biosynthesis; L-histidine biosynthesis; L-histidine from 5-phospho-alpha-D-ribose 1-diphosphate: step 5/9. In terms of biological role, IGPS catalyzes the conversion of PRFAR and glutamine to IGP, AICAR and glutamate. The HisH subunit provides the glutamine amidotransferase activity that produces the ammonia necessary to HisF for the synthesis of IGP and AICAR. This Legionella pneumophila subsp. pneumophila (strain Philadelphia 1 / ATCC 33152 / DSM 7513) protein is Imidazole glycerol phosphate synthase subunit HisH 2.